The following is a 200-amino-acid chain: Small ribosomal subunit protein uS4 (200 aa).

One can recognise an S4 RNA-binding domain in the interval 106 to 170 (RRLQTIVFKK…SPIANELHPI (65 aa)). Residues 178-200 (AERVKEEAEKEAAASEDGGEQDE) are disordered. Positions 179–190 (ERVKEEAEKEAA) are enriched in basic and acidic residues.

It belongs to the universal ribosomal protein uS4 family. In terms of assembly, part of the 30S ribosomal subunit. Contacts protein S5. The interaction surface between S4 and S5 is involved in control of translational fidelity.

Functionally, one of the primary rRNA binding proteins, it binds directly to 16S rRNA where it nucleates assembly of the body of the 30S subunit. With S5 and S12 plays an important role in translational accuracy. The sequence is that of Small ribosomal subunit protein uS4 from Thermoplasma volcanium (strain ATCC 51530 / DSM 4299 / JCM 9571 / NBRC 15438 / GSS1).